Reading from the N-terminus, the 1840-residue chain is MASSSLPNLVPPGPHCLRPFTPESLAAIEQRAVEEEARLQRNKQMEIEEPERKPRSDLEAGKNLPLIYGDPPPEVIGIPLEDLDPYYSDKKTFIVLNKGKAIFRFSATPALYLLSPFSIVRRVAIKVLIHALFSMFIMITILTNCVFMTMSNPPSWSKHVEYTFTGIYTFESLIKMLARGFCIDDFTFLRDPWNWLDFSVITMAYVTEFVDLGNISALRTFRVLRALKTITVIPGLKTIVGALIQSVKKLSDVMILTVFCLSVFALVGLQLFMGNLRQKCVRWPPPMNDTNTTWYGNDTWYSNDTWYGNDTWYINDTWNSQESWAGNSTFDWEAYINDEGNFYFLEGSNDALLCGNSSDAGHCPEGYECIKAGRNPNYGYTSYDTFSWAFLALFRLMTQDYWENLFQLTLRAAGKTYMIFFVVIIFLGSFYLINLILAVVAMAYAEQNEATLAEDQEKEEEFQQMLEKYKKHQEELEKAKAAQALESGEEADGDPTHNKDCNGSLDASGEKGPPRPSCSADSAISDAMEELEEAHQKCPPWWYKCAHKVLIWNCCAPWVKFKHIIYLIVMDPFVDLGITICIVLNTLFMAMEHYPMTEHFDNVLSVGNLVFTGIFTAEMVLKLIAMDPYEYFQQGWNIFDSFIVTLSLVELGLANVQGLSVLRSFRLLRVFKLAKSWPTLNMLIKIIGNSVGALGNLTLVLAIIVFIFAVVGMQLFGKSYKECVCKIASDCNLPRWHMNDFFHSFLIVFRILCGEWIETMWDCMEVAGQAMCLTVFLMVMVIGNLVVLNLFLALLLSSFSADSLAASDEDGEMNNLQIAIGRIKWGIGFAKTFLLGLLRGKILSPKEIILSLGEPGGAGENAEESTPEDEKKEPPPEDKELKDNHILNHVGLTDGPRSSIELDHLNFINNPYLTIQVPIASEESDLEMPTEEETDAFSEPEDIKKPLQPLYDGNSSVCSTADYKPPEEDPEEQAEENPEGEQPEECFTEACVKRCPCLYVDISQGRGKMWWTLRRACFKIVEHNWFETFIVFMILLSSGALAFEDIYIEQRRVIRTILEYADKVFTYIFILEMLLKWVAYGFKVYFTNAWCWLDFLIVDVSIISLVANWLGYSELGPIKSLRTLRALRPLRALSRFEGMRVVVNALLGAIPSIMNVLLVCLIFWLIFSIMGVNLFAGKFYYCVNTTTSERFDISVVNNKSESESLMYTGQVRWMNVKVNYDNVGLGYLSLLQVATFKGWMDIMYAAVDSREKEEQPHYEVNLYMYLYFVIFIIFGSFFTLNLFIGVIIDNFNQQKKKFGGKDIFMTEEQKKYYNAMKKLGSKKPQKPIPRPQNKIQGMVYDFVTKQVFDISIMILICLNMVTMMVETDDQSQLKVDILYNINMVFIIIFTGECVLKMFALRHYYFTIGWNIFDFVVVILSIVGLALSDLIQKYFVSPTLFRVIRLARIGRVLRLIRGAKGIRTLLFALMMSLPALFNIGLLLFLVMFIYSIFGMSNFAYVKKESGIDDMFNFETFGNSIICLFEITTSAGWDGLLNPILNSGPPDCDPTLENPGTNVRGDCGNPSIGICFFCSYIIISFLIVVNMYIAIILENFNVATEESSEPLSEDDFEMFYETWEKFDPDATQFIDYSRLSDFVDTLQEPLKIAKPNKIKLITLDLPMVPGDKIHCLDILFALTKEVLGDSGEMDALKQTMEEKFMAANPSKVSYEPITTTLKRKQEEVCAIKIQRAYRRHLLQRSVKQASYMYRHSQDGNDDGAPEKEGLLANTMNKMYGHEKEGDGVQSQGEEEKASTEDAGPTVEPEPTSSSDTALTPSPPPLPPSSSPPQGQTVRPGVKESLV.

Residues 1 to 131 (MASSSLPNLV…RVAIKVLIHA (131 aa)) are Cytoplasmic-facing. Basic and acidic residues predominate over residues 36 to 60 (EARLQRNKQMEIEEPERKPRSDLEA). Residues 36-63 (EARLQRNKQMEIEEPERKPRSDLEAGKN) are disordered. One copy of the I repeat lies at 113 to 448 (LLSPFSIVRR…VVAMAYAEQN (336 aa)). The helical transmembrane segment at 132 to 150 (LFSMFIMITILTNCVFMTM) threads the bilayer. The Extracellular portion of the chain corresponds to 151–157 (SNPPSWS). The helical transmembrane segment at 158-178 (KHVEYTFTGIYTFESLIKMLA) threads the bilayer. Residues 179-192 (RGFCIDDFTFLRDP) are Cytoplasmic-facing. Residues 193-210 (WNWLDFSVITMAYVTEFV) traverse the membrane as a helical segment. Topologically, residues 211-216 (DLGNIS) are extracellular. A helical transmembrane segment spans residues 217-233 (ALRTFRVLRALKTITVI). Residues 234–252 (PGLKTIVGALIQSVKKLSD) are Cytoplasmic-facing. The helical transmembrane segment at 253–272 (VMILTVFCLSVFALVGLQLF) threads the bilayer. Topologically, residues 273–385 (MGNLRQKCVR…PNYGYTSYDT (113 aa)) are extracellular. A disulfide bridge links Cys-280 with Cys-354. N-linked (GlcNAc...) asparagine glycosylation is found at Asn-288, Asn-291, Asn-297, Asn-303, Asn-309, Asn-315, Asn-327, and Asn-356. Cys-363 and Cys-369 are oxidised to a cystine. The segment at residues 386–410 (FSWAFLALFRLMTQDYWENLFQLTL) is an intramembrane region (pore-forming). At 411–417 (RAAGKTY) the chain is on the extracellular side. The chain crosses the membrane as a helical span at residues 418–438 (MIFFVVIIFLGSFYLINLILA). The Cytoplasmic portion of the chain corresponds to 439 to 572 (VVAMAYAEQN…HIIYLIVMDP (134 aa)). Residues 481 to 522 (AAQALESGEEADGDPTHNKDCNGSLDASGEKGPPRPSCSADS) form a disordered region. Ser-487 is modified (phosphoserine). The II repeat unit spans residues 554–826 (CCAPWVKFKH…QIAIGRIKWG (273 aa)). A helical membrane pass occupies residues 573–591 (FVDLGITICIVLNTLFMAM). Topologically, residues 592–602 (EHYPMTEHFDN) are extracellular. A helical transmembrane segment spans residues 603-622 (VLSVGNLVFTGIFTAEMVLK). Residues 623–636 (LIAMDPYEYFQQGW) are Cytoplasmic-facing. The helical transmembrane segment at 637–656 (NIFDSFIVTLSLVELGLANV) threads the bilayer. Topologically, residues 657–658 (QG) are extracellular. The helical transmembrane segment at 659–676 (LSVLRSFRLLRVFKLAKS) threads the bilayer. At 677–692 (WPTLNMLIKIIGNSVG) the chain is on the cytoplasmic side. Residues 693–711 (ALGNLTLVLAIIVFIFAVV) form a helical membrane-spanning segment. At 712–740 (GMQLFGKSYKECVCKIASDCNLPRWHMND) the chain is on the extracellular side. Cysteines 725 and 731 form a disulfide. Positions 741–761 (FFHSFLIVFRILCGEWIETMW) form an intramembrane region, pore-forming. The Extracellular segment spans residues 762 to 772 (DCMEVAGQAMC). Cys-763 and Cys-772 are joined by a disulfide. Residues 773–791 (LTVFLMVMVIGNLVVLNLF) form a helical membrane-spanning segment. Residues 792–1025 (LALLLSSFSA…ACFKIVEHNW (234 aa)) lie on the Cytoplasmic side of the membrane. Disordered stretches follow at residues 854–884 (EPGG…LKDN) and 925–983 (DLEM…GEQP). Residues 868–884 (EDEKKEPPPEDKELKDN) show a composition bias toward basic and acidic residues. 2 stretches are compositionally biased toward acidic residues: residues 925-940 (DLEM…FSEP) and 968-983 (EDPE…GEQP). An III repeat occupies 1006-1319 (RGKMWWTLRR…KKYYNAMKKL (314 aa)). Residues 1026-1043 (FETFIVFMILLSSGALAF) form a helical membrane-spanning segment. At 1044–1056 (EDIYIEQRRVIRT) the chain is on the extracellular side. The helical transmembrane segment at 1057–1075 (ILEYADKVFTYIFILEMLL) threads the bilayer. Over 1076–1089 (KWVAYGFKVYFTNA) the chain is Cytoplasmic. A helical membrane pass occupies residues 1090–1108 (WCWLDFLIVDVSIISLVAN). Residues 1109 to 1116 (WLGYSELG) are Extracellular-facing. The chain crosses the membrane as a helical span at residues 1117-1135 (PIKSLRTLRALRPLRALSR). The Cytoplasmic portion of the chain corresponds to 1136–1152 (FEGMRVVVNALLGAIPS). Residues 1153-1172 (IMNVLLVCLIFWLIFSIMGV) traverse the membrane as a helical segment. Residues 1173 to 1223 (NLFAGKFYYCVNTTTSERFDISVVNNKSESESLMYTGQVRWMNVKVNYDNV) lie on the Extracellular side of the membrane. N-linked (GlcNAc...) asparagine glycosylation occurs at Asn-1198. The segment at residues 1224–1245 (GLGYLSLLQVATFKGWMDIMYA) is an intramembrane region (pore-forming). Over 1246-1262 (AVDSREKEEQPHYEVNL) the chain is Extracellular. A helical transmembrane segment spans residues 1263–1284 (YMYLYFVIFIIFGSFFTLNLFI). Topologically, residues 1285-1347 (GVIIDNFNQQ…MVYDFVTKQV (63 aa)) are cytoplasmic. Residues 1303–1305 (IFM) form an important for rapid channel inactivation region. The stretch at 1328–1626 (IPRPQNKIQG…WEKFDPDATQ (299 aa)) is one IV repeat. Residues 1348 to 1365 (FDISIMILICLNMVTMMV) traverse the membrane as a helical segment. Over 1366-1376 (ETDDQSQLKVD) the chain is Extracellular. A helical membrane pass occupies residues 1377 to 1395 (ILYNINMVFIIIFTGECVL). Topologically, residues 1396 to 1407 (KMFALRHYYFTI) are cytoplasmic. The chain crosses the membrane as a helical span at residues 1408 to 1425 (GWNIFDFVVVILSIVGLA). The Extracellular segment spans residues 1426–1438 (LSDLIQKYFVSPT). The chain crosses the membrane as a helical span at residues 1439–1455 (LFRVIRLARIGRVLRLI). The Cytoplasmic segment spans residues 1456-1474 (RGAKGIRTLLFALMMSLPA). A helical membrane pass occupies residues 1475 to 1492 (LFNIGLLLFLVMFIYSIF). The Extracellular segment spans residues 1493 to 1514 (GMSNFAYVKKESGIDDMFNFET). The segment at residues 1515 to 1537 (FGNSIICLFEITTSAGWDGLLNP) is an intramembrane region (pore-forming). Topologically, residues 1538–1567 (ILNSGPPDCDPTLENPGTNVRGDCGNPSIG) are extracellular. Residues Cys-1546 and Cys-1561 are joined by a disulfide bond. The helical transmembrane segment at 1568–1590 (ICFFCSYIIISFLIVVNMYIAII) threads the bilayer. Over 1591–1840 (LENFNVATEE…VRPGVKESLV (250 aa)) the chain is Cytoplasmic. The region spanning 1720–1749 (EEVCAIKIQRAYRRHLLQRSVKQASYMYRH) is the IQ domain. The disordered stretch occupies residues 1775 to 1840 (HEKEGDGVQS…VRPGVKESLV (66 aa)). A compositionally biased stretch (low complexity) spans 1804 to 1813 (PTSSSDTALT). The segment covering 1814–1824 (PSPPPLPPSSS) has biased composition (pro residues).

It belongs to the sodium channel (TC 1.A.1.10) family. Nav1.4/SCN4A subfamily. As to quaternary structure, the Nav1.4 voltage-gated sodium channel consists of an ion-conducting alpha subunit SCN4A which is functional on its own and a regulatory beta subunit SCN1B. SCN1B strongly enhances the presence of SCN4A at the cell surface. SCN1B is also required for rapid channel inactivation and recovery after inactivation. It prevents the decrease of channel activity in response to repetitive, high-frequency depolarizations. Interacts with the syntrophins SNTA1, SNTB1 and SNTB2 (via PDZ domain); probably links SCN4A to the actin cytoskeleton and the extracellular matrix via the dystrophin-associated protein complex and regulates its localization in muscle cells. Interacts with TMEM233; probable regulator of the channel. Detected in skeletal muscle.

It localises to the cell membrane. The catalysed reaction is Na(+)(in) = Na(+)(out). With respect to regulation, potently inhibited by tetrodotoxin and saxitoxin. Inhibited by the conotoxin GVIIJ. In terms of biological role, pore-forming subunit of Nav1.4, a voltage-gated sodium (Nav) channel that directly mediates the depolarizing phase of action potentials in excitable membranes. Navs, also called VGSCs (voltage-gated sodium channels) or VDSCs (voltage-dependent sodium channels), operate by switching between closed and open conformations depending on the voltage difference across the membrane. In the open conformation they allow Na(+) ions to selectively pass through the pore, along their electrochemical gradient. The influx of Na+ ions provokes membrane depolarization, initiating the propagation of electrical signals throughout cells and tissues. Highly expressed in skeletal muscles, Nav1.4 generates the action potential crucial for muscle contraction. This is Sodium channel protein type 4 subunit alpha from Rattus norvegicus (Rat).